The following is a 241-amino-acid chain: Aspartate/glutamate leucyltransferase (241 aa).

Belongs to the R-transferase family. Bpt subfamily.

The protein localises to the cytoplasm. The catalysed reaction is N-terminal L-glutamyl-[protein] + L-leucyl-tRNA(Leu) = N-terminal L-leucyl-L-glutamyl-[protein] + tRNA(Leu) + H(+). The enzyme catalyses N-terminal L-aspartyl-[protein] + L-leucyl-tRNA(Leu) = N-terminal L-leucyl-L-aspartyl-[protein] + tRNA(Leu) + H(+). Functions in the N-end rule pathway of protein degradation where it conjugates Leu from its aminoacyl-tRNA to the N-termini of proteins containing an N-terminal aspartate or glutamate. This chain is Aspartate/glutamate leucyltransferase, found in Parvibaculum lavamentivorans (strain DS-1 / DSM 13023 / NCIMB 13966).